The sequence spans 1087 residues: Exportin-7 (1087 aa).

N-acetylalanine is present on Ala-2. Positions 30 to 96 (AEKALVEFTN…RNYVLNYLAT (67 aa)) constitute an Importin N-terminal domain. Ser-570 carries the phosphoserine modification.

The protein belongs to the exportin family. In terms of assembly, binds to nucleoporins. Found in a complex with XPO7, EIF4A1, ARHGAP1, VPS26A, VPS29, VPS35 and SFN. Interacts with ARHGAP1 and SFN. Interacts with Ran and cargo proteins in a GTP-dependent manner.

Its subcellular location is the cytoplasm. The protein resides in the nucleus. It localises to the nuclear pore complex. Functionally, mediates the nuclear export of proteins (cargos) with broad substrate specificity. In the nucleus binds cooperatively to its cargo and to the GTPase Ran in its active GTP-bound form. Docking of this trimeric complex to the nuclear pore complex (NPC) is mediated through binding to nucleoporins. Upon transit of a nuclear export complex into the cytoplasm, disassembling of the complex and hydrolysis of Ran-GTP to Ran-GDP (induced by RANBP1 and RANGAP1, respectively) cause release of the cargo from the export receptor. XPO7 then return to the nuclear compartment and mediate another round of transport. The directionality of nuclear export is thought to be conferred by an asymmetric distribution of the GTP- and GDP-bound forms of Ran between the cytoplasm and nucleus. This Pongo abelii (Sumatran orangutan) protein is Exportin-7 (XPO7).